Here is a 523-residue protein sequence, read N- to C-terminus: Putative glycerol-3-phosphate transporter 1 (523 aa).

The next 12 membrane-spanning stretches (helical) occupy residues 29 to 49, 102 to 122, 133 to 153, 163 to 183, 196 to 216, 228 to 248, 306 to 326, 344 to 364, 368 to 388, 402 to 422, 444 to 464, and 468 to 488; these read LSYS…YASY, VLLG…MYFA, IFLT…GVGY, FLIM…SVVA, LIMG…SLIA, FVVP…FLPV, FALC…WLPF, GNLS…AGYI, IGAR…ALFF, SLMF…TTAV, AIID…TGYI, and GSWT…GLLL.

This sequence belongs to the major facilitator superfamily. Organophosphate:Pi antiporter (OPA) (TC 2.A.1.4) family.

Its subcellular location is the membrane. This Arabidopsis thaliana (Mouse-ear cress) protein is Putative glycerol-3-phosphate transporter 1.